Consider the following 562-residue polypeptide: Formate--tetrahydrofolate ligase (562 aa).

70–77 (TPAGEGKS) lines the ATP pocket.

Belongs to the formate--tetrahydrofolate ligase family.

It carries out the reaction (6S)-5,6,7,8-tetrahydrofolate + formate + ATP = (6R)-10-formyltetrahydrofolate + ADP + phosphate. The protein operates within one-carbon metabolism; tetrahydrofolate interconversion. This is Formate--tetrahydrofolate ligase from Paenarthrobacter aurescens (strain TC1).